Consider the following 153-residue polypeptide: Aspartate carbamoyltransferase regulatory chain (153 aa).

Cys-109, Cys-114, Cys-138, and Cys-141 together coordinate Zn(2+).

The protein belongs to the PyrI family. As to quaternary structure, contains catalytic and regulatory chains. Requires Zn(2+) as cofactor.

Functionally, involved in allosteric regulation of aspartate carbamoyltransferase. In Vibrio campbellii (strain ATCC BAA-1116), this protein is Aspartate carbamoyltransferase regulatory chain.